The following is a 615-amino-acid chain: 1-deoxy-D-xylulose-5-phosphate synthase (615 aa).

Thiamine diphosphate is bound by residues His-76 and 117-119 (GHS). Asp-148 lines the Mg(2+) pocket. Thiamine diphosphate contacts are provided by residues 149–150 (GA), Asn-177, Tyr-284, and Glu-365. Asn-177 is a Mg(2+) binding site.

The protein belongs to the transketolase family. DXPS subfamily. Homodimer. The cofactor is Mg(2+). Thiamine diphosphate serves as cofactor.

The catalysed reaction is D-glyceraldehyde 3-phosphate + pyruvate + H(+) = 1-deoxy-D-xylulose 5-phosphate + CO2. It participates in metabolic intermediate biosynthesis; 1-deoxy-D-xylulose 5-phosphate biosynthesis; 1-deoxy-D-xylulose 5-phosphate from D-glyceraldehyde 3-phosphate and pyruvate: step 1/1. In terms of biological role, catalyzes the acyloin condensation reaction between C atoms 2 and 3 of pyruvate and glyceraldehyde 3-phosphate to yield 1-deoxy-D-xylulose-5-phosphate (DXP). This Francisella tularensis subsp. novicida (strain U112) protein is 1-deoxy-D-xylulose-5-phosphate synthase.